Here is a 1099-residue protein sequence, read N- to C-terminus: Sterol regulatory element-binding protein 2 (1099 aa).

The tract at residues 1–47 (MDASEFMDTMDPSLSELGDEFTLGDIDEMLQFVSNQVDFPDIFEDQM) is transcriptional activation (acidic). Residues 1–461 (MDASEFMDTM…SCVGVMDRSR (461 aa)) lie on the Cytoplasmic side of the membrane. The interval 65 to 107 (LTPPHTPVQTSSQTHTQTLTQAHTQTHTQTHTQTRTPPVLQPR) is disordered. A compositionally biased stretch (low complexity) spans 71 to 100 (PVQTSSQTHTQTLTQAHTQTHTQTHTQTRT). The region spanning 320–370 (ERRTTHNIIEKRYRSSINDKILELRDLVLGNDAKMHKSGVLRKAIDYIKYL) is the bHLH domain. The leucine-zipper stretch occupies residues 370–391 (LQQVNHKLRQENLTLKMANQKN). A helical transmembrane segment spans residues 462-482 (LLLCALSFLCLSLNPLPSLLG). Residues 483–513 (AEAPAGSPEVAGHGPTRTLFSLPAQTQSFGA) lie on the Lumenal side of the membrane. The chain crosses the membrane as a helical span at residues 514-534 (WLWCVLPFLLVWVVSGVGVVW). Residues 535–1099 (GCVRVLYLWE…LSGGTTIAAS (565 aa)) lie on the Cytoplasmic side of the membrane.

Belongs to the SREBP family. In terms of assembly, forms a tight complex with scap, the SCAP-SREBP complex, in the endoplasmic reticulum membrane. As to quaternary structure, homodimer; efficient DNA binding of the soluble transcription factor fragment requires dimerization with another bHLH protein. Processed in the Golgi apparatus, releasing the protein from the membrane. At low cholesterol the SCAP-SREBP complex is recruited into COPII vesicles for export from the endoplasmic reticulum. In the Golgi, complex SREBPs are cleaved sequentially by site-1 (mbtps1, S1P) and site-2 (mbtps2, S2P) protease. The first cleavage by site-1 protease occurs within the luminal loop, the second cleavage by site-2 protease occurs within the first transmembrane domain, releasing the transcription factor from the Golgi membrane.

Its subcellular location is the endoplasmic reticulum membrane. It localises to the golgi apparatus membrane. It is found in the cytoplasmic vesicle. The protein resides in the COPII-coated vesicle membrane. The protein localises to the nucleus. Its function is as follows. Precursor of the transcription factor form (Processed sterol regulatory element-binding protein 2), which is embedded in the endoplasmic reticulum membrane. Low sterol concentrations promote processing of this form, releasing the transcription factor form that translocates into the nucleus and activates transcription of genes involved in cholesterol biosynthesis. In terms of biological role, key transcription factor that regulates expression of genes involved in cholesterol biosynthesis. Binds to the sterol regulatory element 1 (SRE-1) (5'-ATCACCCCAC-3'). Has dual sequence specificity binding to both an E-box motif (5'-ATCACGTGA-3') and to SRE-1 (5'-ATCACCCCAC-3'). Regulates transcription of genes related to cholesterol synthesis pathway. Activated by mediated cholesterol efflux, transactivates NOTCH and promotes hematopoietic stem and progenitor cell emergence. This chain is Sterol regulatory element-binding protein 2, found in Danio rerio (Zebrafish).